We begin with the raw amino-acid sequence, 67 residues long: MGKIRQGFIKRVARELVNKYPNEFTTDFEHNKKKVQELTNVTSKKIRNRIAGYVTKLVRMKMEGKIL.

Belongs to the eukaryotic ribosomal protein eS17 family. Part of the 30S ribosomal subunit.

In Pyrococcus furiosus (strain ATCC 43587 / DSM 3638 / JCM 8422 / Vc1), this protein is Small ribosomal subunit protein eS17.